Reading from the N-terminus, the 135-residue chain is DNA-directed RNA polymerase subunit omega (135 aa).

This sequence belongs to the RNA polymerase subunit omega family. The RNAP catalytic core consists of 2 alpha, 1 beta, 1 beta' and 1 omega subunit. When a sigma factor is associated with the core the holoenzyme is formed, which can initiate transcription.

The catalysed reaction is RNA(n) + a ribonucleoside 5'-triphosphate = RNA(n+1) + diphosphate. Functionally, promotes RNA polymerase assembly. Latches the N- and C-terminal regions of the beta' subunit thereby facilitating its interaction with the beta and alpha subunits. This Rhizobium meliloti (strain 1021) (Ensifer meliloti) protein is DNA-directed RNA polymerase subunit omega.